The chain runs to 192 residues: MKLLEDRILNDGDVLGENILKLTFLTHQVDFELMREIGKVFAEKFKDTGITKVVAIEASGIAPALYATEALDVPMIFAKKAKNITMNEGILTAEVYSFTKQVTSTVSIASKFLTPEDKVLIVDDFLANGQAAKGLIQIIEEAGAHVEAVGIVIEKSFQDGRALLEEASYPVVSLARLERFENGQVVFKEADI.

Residues Leu-20 and Thr-26 each contribute to the xanthine site. 127-131 (ANGQA) provides a ligand contact to 5-phospho-alpha-D-ribose 1-diphosphate. Xanthine is bound at residue Lys-155.

Belongs to the purine/pyrimidine phosphoribosyltransferase family. Xpt subfamily. Homodimer.

It localises to the cytoplasm. The catalysed reaction is XMP + diphosphate = xanthine + 5-phospho-alpha-D-ribose 1-diphosphate. The protein operates within purine metabolism; XMP biosynthesis via salvage pathway; XMP from xanthine: step 1/1. In terms of biological role, converts the preformed base xanthine, a product of nucleic acid breakdown, to xanthosine 5'-monophosphate (XMP), so it can be reused for RNA or DNA synthesis. In Streptococcus thermophilus, this protein is Xanthine phosphoribosyltransferase.